Here is an 88-residue protein sequence, read N- to C-terminus: DNA-directed RNA polymerase subunit omega (88 aa).

It belongs to the RNA polymerase subunit omega family. As to quaternary structure, the RNAP catalytic core consists of 2 alpha, 1 beta, 1 beta' and 1 omega subunit. When a sigma factor is associated with the core the holoenzyme is formed, which can initiate transcription.

It carries out the reaction RNA(n) + a ribonucleoside 5'-triphosphate = RNA(n+1) + diphosphate. Its function is as follows. Promotes RNA polymerase assembly. Latches the N- and C-terminal regions of the beta' subunit thereby facilitating its interaction with the beta and alpha subunits. The protein is DNA-directed RNA polymerase subunit omega of Kineococcus radiotolerans (strain ATCC BAA-149 / DSM 14245 / SRS30216).